A 328-amino-acid polypeptide reads, in one-letter code: uncharacterized protein (328 aa).

Coiled-coil stretches lie at residues 67 to 190 (FKEQ…VLEE) and 223 to 251 (MAQR…DNMM).

This is an uncharacterized protein from Mus musculus (Mouse).